Consider the following 59-residue polypeptide: Small ribosomal subunit protein eS30 (59 aa).

The interval 1–35 (KVHGSLARAGKVRGQTPKVAKQEKKKKKTGRAKRR) is disordered. Residues 23–35 (EKKKKKTGRAKRR) are compositionally biased toward basic residues. Lys-51 is modified (N6-succinyllysine).

This sequence belongs to the eukaryotic ribosomal protein eS30 family.

This is Small ribosomal subunit protein eS30 (Fau) from Mus spicilegus (Steppe mouse).